Consider the following 44-residue polypeptide: F420-non-reducing hydrogenase vhu subunit U (44 aa).

Ni(2+) contacts are provided by Sec20 and Cys23. Position 20 (Sec20) is a non-standard amino acid, selenocysteine. Residues 27–44 constitute a propeptide, removed in mature form; it reads MIVEDAEGNVVFEIVNDE.

This sequence belongs to the [NiFe]/[NiFeSe] hydrogenase large subunit family. In terms of assembly, the F420-non-reducing hydrogenase vhu is composed of four subunits; VhuA, VhuD, VhuG and VhuU. Ni(2+) is required as a cofactor.

This chain is F420-non-reducing hydrogenase vhu subunit U (vhuU), found in Methanococcus voltae.